A 273-amino-acid chain; its full sequence is Putative phosphoenolpyruvate synthase regulatory protein (273 aa).

153–160 (AVSRAGKT) contributes to the ADP binding site.

This sequence belongs to the pyruvate, phosphate/water dikinase regulatory protein family. PSRP subfamily.

It carries out the reaction [pyruvate, water dikinase] + ADP = [pyruvate, water dikinase]-phosphate + AMP + H(+). The catalysed reaction is [pyruvate, water dikinase]-phosphate + phosphate + H(+) = [pyruvate, water dikinase] + diphosphate. In terms of biological role, bifunctional serine/threonine kinase and phosphorylase involved in the regulation of the phosphoenolpyruvate synthase (PEPS) by catalyzing its phosphorylation/dephosphorylation. The protein is Putative phosphoenolpyruvate synthase regulatory protein of Xanthomonas campestris pv. campestris (strain ATCC 33913 / DSM 3586 / NCPPB 528 / LMG 568 / P 25).